The sequence spans 424 residues: Cysteate synthase (424 aa).

Lys106 carries the N6-(pyridoxal phosphate)lysine modification. Residues Asn132 and Thr381 each contribute to the pyridoxal 5'-phosphate site.

The protein belongs to the threonine synthase family. Cysteate synthase subfamily. In terms of assembly, homotrimer. Pyridoxal 5'-phosphate serves as cofactor.

It catalyses the reaction O-phospho-L-serine + sulfite + H(+) = L-cysteate + phosphate. It functions in the pathway cofactor biosynthesis; coenzyme M biosynthesis. In terms of biological role, specifically catalyzes the beta-elimination of phosphate from L-phosphoserine and the beta-addition of sulfite to the dehydroalanine intermediate to produce L-cysteate. The protein is Cysteate synthase of Methanoregula boonei (strain DSM 21154 / JCM 14090 / 6A8).